Here is a 270-residue protein sequence, read N- to C-terminus: Ribosomal RNA small subunit methyltransferase A (270 aa).

6 residues coordinate S-adenosyl-L-methionine: H11, L13, G38, E59, D84, and N109.

Belongs to the class I-like SAM-binding methyltransferase superfamily. rRNA adenine N(6)-methyltransferase family. RsmA subfamily.

It is found in the cytoplasm. It carries out the reaction adenosine(1518)/adenosine(1519) in 16S rRNA + 4 S-adenosyl-L-methionine = N(6)-dimethyladenosine(1518)/N(6)-dimethyladenosine(1519) in 16S rRNA + 4 S-adenosyl-L-homocysteine + 4 H(+). In terms of biological role, specifically dimethylates two adjacent adenosines (A1518 and A1519) in the loop of a conserved hairpin near the 3'-end of 16S rRNA in the 30S particle. May play a critical role in biogenesis of 30S subunits. This chain is Ribosomal RNA small subunit methyltransferase A, found in Crocosphaera subtropica (strain ATCC 51142 / BH68) (Cyanothece sp. (strain ATCC 51142)).